We begin with the raw amino-acid sequence, 542 residues long: Serine/threonine-protein phosphatase 2A regulatory subunit pptr-1 (542 aa).

Disordered stretches follow at residues 1–28 (MHGS…TGGQ) and 500–542 (DYLK…PAKK). Polar residues predominate over residues 528–542 (KKSSTGSETTTPAKK).

It belongs to the phosphatase 2A regulatory subunit B56 family. As to quaternary structure, part of a complex consisting of a common heterodimeric core enzyme, composed of catalytic subunit let-92 and constant regulatory subunit paa-1, that associates with a variety of regulatory subunits which confer distinct properties to the holoenzyme. Interacts with akt-1 but not akt-2. Interacts with sgk-1. Interacts with P granule components meg-1, meg-3 and meg-4. Expressed in pharynx, vulva and spermatheca.

It localises to the cytoplasm. Functionally, probable regulatory subunit of serine/threonine-protein phosphatase let-92 which negatively regulates the insulin receptor signaling cascade composed of daf-2, age-1, akt-1, akt-2 and sgk-1 by promoting the dephosphorylation of akt-1 on 'Thr-350'. Negatively regulates several functions controlled by the insulin pathway including dauer formation, lifespan, fat storage and stress resistance. Plays a role in the asymmetric segregation of the P granule components during embryonic cell divisions but does not play an essential role in specifying germ cell fate. Within a PP2A phosphatase complex, acts redundantly with pptr-2, to dephosphorylate P granule components including meg-1 and meg-3 to promote the assembly and accumulation of zygotic P granules in the posterior cytoplasm during zygote polarization, and thus maintain P granule distribution and segregation in early stage embryos following meiosis. In adults, required to promote germ cell proliferation and differentiation when exposed to thermic stress. This Caenorhabditis elegans protein is Serine/threonine-protein phosphatase 2A regulatory subunit pptr-1.